A 106-amino-acid polypeptide reads, in one-letter code: Large ribosomal subunit protein uL23 (106 aa).

The protein belongs to the universal ribosomal protein uL23 family. In terms of assembly, part of the 50S ribosomal subunit. Contacts protein L29, and trigger factor when it is bound to the ribosome.

One of the early assembly proteins it binds 23S rRNA. One of the proteins that surrounds the polypeptide exit tunnel on the outside of the ribosome. Forms the main docking site for trigger factor binding to the ribosome. This is Large ribosomal subunit protein uL23 from Neisseria meningitidis serogroup A / serotype 4A (strain DSM 15465 / Z2491).